The sequence spans 805 residues: Transcription factor E2f1 (805 aa).

3 disordered regions span residues 9–45 (APINNSNSSSSHTTTSSNTQRHQQHQQHYGGSGTTGH), 119–208 (AAAA…LRHD), and 224–255 (PASHHPFSLSTPQQQLAASVASSSSSGDRNRA). Low complexity-rich tracts occupy residues 12–37 (NNSNSSSSHTTTSSNTQRHQQHQQHY) and 119–134 (AAAAATAGHTQQQLQQ). Composition is skewed to polar residues over residues 144–154 (RKATGKSNDIT) and 181–195 (HHQTVYQKHTASSAP). The PIP-box K+4 motif motif lies at 147–161 (TGKSNDITNYYKVKR). Low complexity predominate over residues 240–249 (AASVASSSSS). A DNA-binding region spans residues 253-318 (NRADTSLGIL…KKSKNNIQWR (66 aa)). A dimerization region spans residues 318–411 (RCGQSMVSQE…LPNTKLPREI (94 aa)). A Phosphoserine modification is found at Ser434. Disordered stretches follow at residues 578–650 (SLTE…QRRS) and 714–743 (GAGANADPHQPYSHDRNSLPPGVADCDANS). 2 stretches are compositionally biased toward low complexity: residues 595-615 (AAAAIAAGSSTTATTTLNSHN) and 623-636 (SNHSNHSSSNNSKS). Positions 637–647 (QPPTIGYGSSQ) are enriched in polar residues.

This sequence belongs to the E2F/DP family. Heterodimer of E2f and Dp. Cooperates to give sequence-specific DNA binding and optimal trans-activation. Interacts with PCNA. Post-translationally, ubiquitinated by the DCX(DTL) complex, also named CRL4(CDT2) complex, leading to its degradation during S phase. Ubiquitination by the DCX(DTL) complex is essential for cell cycle control and is PCNA-dependent: interacts with PCNA via its PIP-box, while the presence of the containing the 'K+4' motif in the PIP box, recruit the DCX(DTL) complex, leading to its degradation. In terms of tissue distribution, segmentally repeated expression throughout early embryos is restricted to the ventral nerve cord in later embryos.

It is found in the nucleus. Functionally, transcriptional activator that binds to E2f sites. Required for wild-type growth in mitotic and polytene tissues, Contributes to the expression of replication genes at the G1-S transition and Cyclin E. Activates cell proliferation in wing imaginal disk, which requires expression of vg. This is Transcription factor E2f1 from Drosophila melanogaster (Fruit fly).